A 648-amino-acid polypeptide reads, in one-letter code: Macrolide export ATP-binding/permease protein MacB (648 aa).

One can recognise an ABC transporter domain in the interval 6 to 251; that stretch reads IRVRGVSRAF…GPSAGWRGAI (246 aa). Position 42–49 (42–49) interacts with ATP; that stretch reads GASGSGKS. A run of 4 helical transmembrane segments spans residues 273-293, 528-548, 572-592, and 613-633; these read LLTM…SALG, VAVI…LVSV, FLIE…MLAL, and SIIV…FLPA.

The protein belongs to the ABC transporter superfamily. Macrolide exporter (TC 3.A.1.122) family. As to quaternary structure, homodimer.

Its subcellular location is the cell inner membrane. Its function is as follows. Non-canonical ABC transporter that contains transmembrane domains (TMD), which form a pore in the inner membrane, and an ATP-binding domain (NBD), which is responsible for energy generation. Confers resistance against macrolides. This is Macrolide export ATP-binding/permease protein MacB from Agrobacterium fabrum (strain C58 / ATCC 33970) (Agrobacterium tumefaciens (strain C58)).